The following is a 560-amino-acid chain: MADGFPWLTAIILLPLVASAFIPLLPDKEGKLVRWYALGVGIADFVLMCYTFWHHYDTSSATFQLVEKYDWLPQIGFSWAVSVDGISMPLVLLAGFVTTLSMLAAWQVNLKPRLFYFLMLVLYSAQIGVFVAQDLLLFFIMWELELVPVYLLVSIWGGQKRRYAATKFLLYTAAASIFILIAGLAMALYGDNTTFDIVELGAKNYPLALELLLYAGLLIAFGVKLAIFPLHTWLPDAHGEASAPVSMILAGVLLKMGGYGLIRLNLELLPDAHIYFAPVLATLGVINIIYGGLNSFAQTHMKRRLAYSSVSHMGFVLLGIASFTDVGVSGAMLQMLSHGLIAAVLFFLAGVTYDRTHTMAMDNLGGIGQAMPKVFALFTAGTMASLALPGMSGFVSELKVFIGVTTSDIYSPTFCTVMVFLAAVGVILTPIYLLSMLRQVFYGTGAELSCNINNGAYQNQEDEGTACFGTDCLLPGEAVYRDASVREVFIAVSFLVLIIGVGVYPKIATQLYDVKTVAVNTQVRQSYTQIAQSNPQIYAKGFFTPQIVEPEVMAVSGVIK.

Helical transmembrane passes span F5–L25, W35–H55, I86–W106, L114–D134, L135–I155, F168–L188, A208–F228, S242–I262, H273–L293, V310–G330, A331–V351, V374–F394, V417–L437, and V488–A508.

It belongs to the complex I subunit 4 family.

Its subcellular location is the cellular thylakoid membrane. It carries out the reaction a plastoquinone + NADH + (n+1) H(+)(in) = a plastoquinol + NAD(+) + n H(+)(out). It catalyses the reaction a plastoquinone + NADPH + (n+1) H(+)(in) = a plastoquinol + NADP(+) + n H(+)(out). Its function is as follows. NDH-1 shuttles electrons from NAD(P)H, via FMN and iron-sulfur (Fe-S) centers, to quinones in the respiratory chain. The immediate electron acceptor for the enzyme in this species is believed to be plastoquinone. Couples the redox reaction to proton translocation (for every two electrons transferred, four hydrogen ions are translocated across the cytoplasmic membrane), and thus conserves the redox energy in a proton gradient. The sequence is that of NAD(P)H-quinone oxidoreductase chain 4-3 (ndhD3) from Nostoc sp. (strain PCC 7120 / SAG 25.82 / UTEX 2576).